Reading from the N-terminus, the 380-residue chain is Crotonobetainyl-CoA reductase (380 aa).

The protein belongs to the acyl-CoA dehydrogenase family. As to quaternary structure, homotetramer. Requires FAD as cofactor.

The protein localises to the cytoplasm. It carries out the reaction 4-(trimethylamino)butanoyl-CoA + oxidized [electron-transfer flavoprotein] + H(+) = crotonobetainyl-CoA + reduced [electron-transfer flavoprotein]. It functions in the pathway amine and polyamine metabolism; carnitine metabolism. In terms of biological role, catalyzes the reduction of crotonobetainyl-CoA to gamma-butyrobetainyl-CoA. This Escherichia coli (strain UTI89 / UPEC) protein is Crotonobetainyl-CoA reductase.